The chain runs to 308 residues: Elongation factor Ts (308 aa).

The segment at 80-83 (TDFV) is involved in Mg(2+) ion dislocation from EF-Tu.

This sequence belongs to the EF-Ts family.

It is found in the cytoplasm. Its function is as follows. Associates with the EF-Tu.GDP complex and induces the exchange of GDP to GTP. It remains bound to the aminoacyl-tRNA.EF-Tu.GTP complex up to the GTP hydrolysis stage on the ribosome. The protein is Elongation factor Ts of Rhizobium etli (strain ATCC 51251 / DSM 11541 / JCM 21823 / NBRC 15573 / CFN 42).